The following is a 1012-amino-acid chain: Klotho (1012 aa).

Positions 1 to 33 are cleaved as a signal peptide; it reads MPASAPPRRPRPPPPSLSLLLVLLGLGGRRLRA. At 34 to 981 the chain is on the extracellular side; the sequence is EPGDGAQTWA…ECSFFHTRKS (948 aa). 2 glycosyl hydrolase-1 regions span residues 57–506 and 515–953; these read FQGT…KNGF and LEGT…SNGF. N-linked (GlcNAc...) asparagine glycosylation is found at N106, N159, N283, N344, N607, N612, and N694. Residues 982-1002 traverse the membrane as a helical segment; sequence LLAFIAFLFFASIISLSLIFY. Topologically, residues 1003–1012 are cytoplasmic; that stretch reads YSKKGRRSYK.

This sequence belongs to the glycosyl hydrolase 1 family. Klotho subfamily. As to quaternary structure, homodimer. Interacts with FGF23 and FGFR1. N-glycosylated. As to expression, present in cortical renal tubules (at protein level). Soluble peptide is present in serum and cerebrospinal fluid. Expressed in kidney, placenta, small intestine and prostate. Down-regulated in renal cell carcinomas, hepatocellular carcinomas, and in chronic renal failure kidney.

Its subcellular location is the cell membrane. It is found in the apical cell membrane. It localises to the secreted. It carries out the reaction a beta-D-glucuronoside + H2O = D-glucuronate + an alcohol. In terms of biological role, may have weak glycosidase activity towards glucuronylated steroids. However, it lacks essential active site Glu residues at positions 239 and 872, suggesting it may be inactive as a glycosidase in vivo. May be involved in the regulation of calcium and phosphorus homeostasis by inhibiting the synthesis of active vitamin D. Essential factor for the specific interaction between FGF23 and FGFR1. Its function is as follows. The Klotho peptide generated by cleavage of the membrane-bound isoform may be an anti-aging circulating hormone which would extend life span by inhibiting insulin/IGF1 signaling. The protein is Klotho (KL) of Homo sapiens (Human).